Reading from the N-terminus, the 300-residue chain is MDSYQEEEPVASTSGLQDLQTLSELVGPENAGEGDLVIAEEPEENPRRPRRYTKRDVKCVSYHAYKELEDKHPHHIKLQDWIPKPEEMSKSICKRLILCGLYSGEKAREILKKPFTVSWEQSETNPDCFIVSYTCIFCDAVIHDPMPVVWDSEVEIWVKYKPLRGIVGSAVFIMEKHQKNCSLVKPSTSCPEGPKPRRRHDPVLRCDMFEKHHKPRPKRSRKRSIDHESCASSGDTVANESGPLCTNTFWTPGPVLQGLLGESSNLPDLEVHMSGGPFWKEVYGDSILGPPSGSGEHSVL.

Disordered regions lie at residues 1 to 20 (MDSY…QDLQ), 26 to 50 (VGPE…RRPR), and 185 to 237 (KPST…GDTV). The span at 11 to 20 (ASTSGLQDLQ) shows a compositional bias: polar residues. A DNA-binding region spans residues 89 to 200 (SKSICKRLIL…PEGPKPRRRH (112 aa)). The span at 201–210 (DPVLRCDMFE) shows a compositional bias: basic and acidic residues. Residues 211 to 222 (KHHKPRPKRSRK) are compositionally biased toward basic residues. The short motif at 214-223 (KPRPKRSRKR) is the Nuclear localization signal element. The transactivation domain stretch occupies residues 224–300 (SIDHESCASS…PSGSGEHSVL (77 aa)).

In terms of assembly, homodimer or homomultimer. Forms complexes with the host nuclear factors NFIA, NFIB, NFIC or NFIX.

The protein resides in the host nucleus. Functionally, transcriptional transactivator that activates the viral internal promoter (IP), thereby enhancing its own expression. This transactivation is repressed by nuclear factor I. Also transactivates the long terminal repeat (LTR) promoter, thereby inducing structural gene expression, initiating the late phase of infection. It is therefore a key regulator of viral gene expression. It directly binds to and activates DNA target sites of viral promoters and those of distinct cellular genes. Required for viral replication. The polypeptide is Protein Bel-1 (bel1) (Pan troglodytes (Chimpanzee)).